We begin with the raw amino-acid sequence, 217 residues long: Nascent polypeptide-associated complex subunit alpha-like protein 2 (217 aa).

Residues 1-81 (MSPPPAVVTE…SEKKSRKAML (81 aa)) are disordered. Residues 37–60 (PIVEDVKDDEDDDDDDEEEEDDDA) show a composition bias toward acidic residues. An NAC-A/B domain is found at 70-135 (SRSEKKSRKA…AKIEDLSSQL (66 aa)). Residues 178-215 (VEARDIDLVMTQAGVSRSKAVKALKSHDGDIVSAIMEL) enclose the UBA domain.

Belongs to the NAC-alpha family.

May promote appropriate targeting of ribosome-nascent polypeptide complexes. The protein is Nascent polypeptide-associated complex subunit alpha-like protein 2 of Arabidopsis thaliana (Mouse-ear cress).